The chain runs to 113 residues: uncharacterized protein (113 aa).

This is an uncharacterized protein from Haemophilus influenzae (strain ATCC 51907 / DSM 11121 / KW20 / Rd).